The sequence spans 422 residues: Carboxypeptidase B2 (422 aa).

An N-terminal signal peptide occupies residues methionine 1–alanine 21. A propeptide spans phenylalanine 22 to arginine 113 (activation peptide). N-linked (GlcNAc...) asparagine glycosylation is found at asparagine 43, asparagine 72, asparagine 84, and asparagine 107. The 298-residue stretch at glutamine 121–valine 418 folds into the Peptidase M14 domain. Cysteine 177 and cysteine 190 are joined by a disulfide. 2 residues coordinate Zn(2+): histidine 180 and glutamate 183. Residues histidine 180 to glutamate 183 and arginine 238 each bind substrate. N-linked (GlcNAc...) asparagine glycosylation is present at asparagine 240. Intrachain disulfides connect cysteine 249/cysteine 273 and cysteine 264/cysteine 278. Asparagine 255–arginine 256 provides a ligand contact to substrate. Zn(2+) is bound at residue histidine 309. Serine 310–tyrosine 311 lines the substrate pocket. N-linked (GlcNAc...) asparagine glycosylation occurs at asparagine 322. Substrate is bound at residue tyrosine 362. Glutamate 384 acts as the Proton donor/acceptor in catalysis.

This sequence belongs to the peptidase M14 family. Zn(2+) is required as a cofactor. Plasma; synthesized in the liver.

The protein localises to the secreted. It catalyses the reaction Release of C-terminal Arg and Lys from a polypeptide.. TAFI/CPB2 is unique among carboxypeptidases in that it spontaneously inactivates with a short half-life, a property that is crucial for its role in controlling blood clot lysis. The zymogen is stabilized by interactions with the activation peptide. Release of the activation peptide increases a dynamic flap mobility and in time this leads to conformational changes that disrupt the catalytic site and expose a cryptic thrombin-cleavage site present at Arg-323. In terms of biological role, cleaves C-terminal arginine or lysine residues from biologically active peptides such as kinins or anaphylatoxins in the circulation thereby regulating their activities. Down-regulates fibrinolysis by removing C-terminal lysine residues from fibrin that has already been partially degraded by plasmin. The protein is Carboxypeptidase B2 (Cpb2) of Rattus norvegicus (Rat).